Reading from the N-terminus, the 366-residue chain is Mitogen-activated protein kinase 13 (366 aa).

Positions 25-308 constitute a Protein kinase domain; that stretch reads YVSLTHIGSG…ASQALAHPFF (284 aa). 31 to 39 is an ATP binding site; sequence IGSGAYGSV. The residue at position 47 (serine 47) is a Phosphoserine. Residue lysine 54 participates in ATP binding. Residue aspartate 150 is the Proton acceptor of the active site. A Phosphothreonine; by MAP2K3, MAP2K4, MAP2K6 and MAP2K7 modification is found at threonine 180. The TXY signature appears at 180–182; it reads TGY. Residue tyrosine 182 is modified to Phosphotyrosine; by MAP2K3, MAP2K4, MAP2K6 and MAP2K7. Serine 350 is subject to Phosphoserine.

It belongs to the protein kinase superfamily. CMGC Ser/Thr protein kinase family. MAP kinase subfamily. As to quaternary structure, interacts with MAPK8IP2. Mg(2+) serves as cofactor. Post-translationally, dually phosphorylated on Thr-180 and Tyr-182 by MAP2K3/MKK3, MAP2K4/MKK4, MAP2K6/MKK6 and MAP2K7/MKK7, which activates the enzyme. Dephosphorylated by dual specificity phosphatase DUSP1.

It carries out the reaction L-seryl-[protein] + ATP = O-phospho-L-seryl-[protein] + ADP + H(+). The catalysed reaction is L-threonyl-[protein] + ATP = O-phospho-L-threonyl-[protein] + ADP + H(+). With respect to regulation, activated by phosphorylation on threonine and tyrosine by dual specificity kinases, MAP2K3/MKK3 MAP2K6/MKK6, MAP2K4/MKK4 and MAP2K7/MKK7. Activation by ultraviolet radiation, hyperosmotic shock, anisomycin or by TNF-alpha is mediated by MAP2K3/MKK3. Inhibited by dual specificity phosphatase DUSP1. Its function is as follows. Serine/threonine kinase which acts as an essential component of the MAP kinase signal transduction pathway. MAPK13 is one of the four p38 MAPKs which play an important role in the cascades of cellular responses evoked by extracellular stimuli such as pro-inflammatory cytokines or physical stress leading to direct activation of transcription factors such as ELK1 and ATF2. Accordingly, p38 MAPKs phosphorylate a broad range of proteins and it has been estimated that they may have approximately 200 to 300 substrates each. MAPK13 is one of the less studied p38 MAPK isoforms. Some of the targets are downstream kinases such as MAPKAPK2, which are activated through phosphorylation and further phosphorylate additional targets. Plays a role in the regulation of protein translation by phosphorylating and inactivating EEF2K. Involved in cytoskeletal remodeling through phosphorylation of MAPT and STMN1. Mediates UV irradiation induced up-regulation of the gene expression of CXCL14. Plays an important role in the regulation of epidermal keratinocyte differentiation, apoptosis and skin tumor development. Phosphorylates the transcriptional activator MYB in response to stress which leads to rapid MYB degradation via a proteasome-dependent pathway. MAPK13 also phosphorylates and down-regulates PRKD1 during regulation of insulin secretion in pancreatic beta cells. This chain is Mitogen-activated protein kinase 13 (MAPK13), found in Bos taurus (Bovine).